Reading from the N-terminus, the 160-residue chain is Ribosome maturation factor RimP (160 aa).

It belongs to the RimP family.

It is found in the cytoplasm. Required for maturation of 30S ribosomal subunits. The polypeptide is Ribosome maturation factor RimP (Symbiobacterium thermophilum (strain DSM 24528 / JCM 14929 / IAM 14863 / T)).